Consider the following 846-residue polypeptide: DNA mismatch repair protein MutS (846 aa).

610 to 617 (GPNMGGKS) provides a ligand contact to ATP.

It belongs to the DNA mismatch repair MutS family.

This protein is involved in the repair of mismatches in DNA. It is possible that it carries out the mismatch recognition step. This protein has a weak ATPase activity. This is DNA mismatch repair protein MutS from Legionella pneumophila (strain Paris).